We begin with the raw amino-acid sequence, 370 residues long: Actin-related protein 2/3 complex subunit 1A (370 aa).

6 WD repeats span residues 6 to 45 (FLLE…WVKA), 50 to 89 (EHNG…WKPT), 140 to 179 (PIRS…VDEK), 202 to 241 (GTGG…QVST), 244 to 284 (TEFL…TFVS), and 322 to 365 (LHQN…SSIQ).

This sequence belongs to the WD repeat ARPC1 family. As to quaternary structure, probable component of the Arp2/3 complex in which it may replace ARPC1B. In addition to its role in the cytoplasmic cytoskeleton, the Arp2/3 complex also promotes actin polymerization in the nucleus, thereby regulating gene transcription and repair of damaged DNA.

Its subcellular location is the cytoplasm. The protein resides in the cytoskeleton. It is found in the nucleus. Functionally, probably functions as a component of the Arp2/3 complex which is involved in regulation of actin polymerization and together with an activating nucleation-promoting factor (NPF) mediates the formation of branched actin networks. In Homo sapiens (Human), this protein is Actin-related protein 2/3 complex subunit 1A (ARPC1A).